The following is a 130-amino-acid chain: Large ribosomal subunit protein bL12c (130 aa).

The protein belongs to the bacterial ribosomal protein bL12 family. In terms of assembly, homodimer. Part of the ribosomal stalk of the 50S ribosomal subunit. Forms a multimeric L10(L12)X complex, where L10 forms an elongated spine to which 2 to 4 L12 dimers bind in a sequential fashion. Binds GTP-bound translation factors.

The protein resides in the plastid. Its function is as follows. Forms part of the ribosomal stalk which helps the ribosome interact with GTP-bound translation factors. Is thus essential for accurate translation. This Prototheca wickerhamii protein is Large ribosomal subunit protein bL12c.